Reading from the N-terminus, the 149-residue chain is Large ribosomal subunit protein bL9 (149 aa).

The protein belongs to the bacterial ribosomal protein bL9 family.

Functionally, binds to the 23S rRNA. This is Large ribosomal subunit protein bL9 from Dichelobacter nodosus (strain VCS1703A).